The sequence spans 37 residues: Cytochrome b6-f complex subunit 5 (37 aa).

The helical transmembrane segment at 5–25 threads the bilayer; sequence LLCGIVLGLIPITLAGLFVAA.

Belongs to the PetG family. In terms of assembly, the 4 large subunits of the cytochrome b6-f complex are cytochrome b6, subunit IV (17 kDa polypeptide, PetD), cytochrome f and the Rieske protein, while the 4 small subunits are PetG, PetL, PetM and PetN. The complex functions as a dimer.

It is found in the cellular thylakoid membrane. In terms of biological role, component of the cytochrome b6-f complex, which mediates electron transfer between photosystem II (PSII) and photosystem I (PSI), cyclic electron flow around PSI, and state transitions. PetG is required for either the stability or assembly of the cytochrome b6-f complex. This is Cytochrome b6-f complex subunit 5 from Cyanothece sp. (strain PCC 7425 / ATCC 29141).